The following is an 82-amino-acid chain: MMDIVEIIIGFIALLMTARIFLERSRARKLLYLCCLSFCISALIALYVDSPMGGIVAITYFICSTISSNAIAYTIEQTKHIE.

This sequence to M.thermoautotrophicum MTH386.

This is an uncharacterized protein from Methanocaldococcus jannaschii (strain ATCC 43067 / DSM 2661 / JAL-1 / JCM 10045 / NBRC 100440) (Methanococcus jannaschii).